The following is a 553-amino-acid chain: MANKNVLSEMDDLMAELGLVETTATPTSDQIKQPQQETAPTYLTYKDPNVSTGPGGDFRNLNDNNGGISRGPGLMSTGPGLVSTGPGLMSTGPGLMSKGPGLPNNSINNNISNNNGGGISSGPGLSFGVSSGVSSGVSSGVSSGVSSGVTLVAQNHLARQPSPPLNSQQQQQQQLPTYLDGVGTLQPISLAATTPDGRVVKANGPICGACGDMIIGVCTNALGRSYHPEHFVCTYCKLPFSGSFIEHEEKLYCENDYLELFSPRCFACIKPIEDTCINALGNRYHPECFSCSGCGDKLRGKPYKEEDGEVYCNTCKIARQKRLAAKSEICSKCKLPITGEYIILQGQPVHSEHYRCEECGCEFNVGKTCHEYEGRLYCYEDYQKQILNICGACSKPIVGRSITALGKVWHPEHFTCTTCQVPFAGSAFREHAGKPYCESHYHQFFGRQCFKCSKPVVDTGVEVFGKIYHREHFTCTGCECVLGKEIMEWDGKPLCFKCFDALPKEVRKRIKEKKAGDKKAEAYREKLAKKEAKELKKERERAAKEKEKESKAK.

The disordered stretch occupies residues 43–115 (LTYKDPNVST…SINNNISNNN (73 aa)). Over residues 99–114 (GPGLPNNSINNNISNN) the composition is skewed to low complexity. LIM zinc-binding domains follow at residues 205 to 262 (PICG…ELFS), 263 to 322 (PRCF…RQKR), 328 to 387 (EICS…KQIL), 388 to 447 (NICG…FFGR), and 448 to 505 (QCFK…LPKE). The interval 534 to 553 (ELKKERERAAKEKEKESKAK) is disordered.

Its subcellular location is the cytoplasm. The protein localises to the cell cortex. It is found in the cytoskeleton. Its function is as follows. Regulates and controls rearrangements of the actin cytoskeleton. Required for tip formation, morphogenesis, cell adhesion and motility, chemotaxis and aggregates formation. May function downstream of paxB. This is LIM domain-containing protein B (limB) from Dictyostelium discoideum (Social amoeba).